Reading from the N-terminus, the 443-residue chain is Sperm-associated antigen 4 protein (443 aa).

The segment covering 1–36 (MRRSPRSGSAASSHNHTPNFYSENSNSSHSATSGDS) has biased composition (low complexity). Positions 1 to 107 (MRRSPRSGSA…VRGGASEPSG (107 aa)) are disordered. A run of 2 helical transmembrane segments spans residues 137–157 (FLSLLFQVLSMVLSLAVDGLV) and 168–188 (FLFTAVSLLSIFLAALWWGLL). Positions 203–244 (TLSQYHHRVHSQGQQLQQLQAELNKLHKEVSSVRAAHSERVA) form a coiled coil. Residues 267–427 (GASIDLEKTS…YRVRAHGVRT (161 aa)) form the SUN domain.

As to quaternary structure, self-associates. Interacts with ODF1. May associate with microtubules. Interacts with SUN3 and SYNE1; suggesting the formation of a spermatogenesis-specific LINC complex; a SUN domain-based heterotrimer of SPAG4 and SUN3 may associate with SYNE1. Interacts with SEPT12 and LMNB1; during spermatogenesis. In terms of tissue distribution, isoform 1 is testis specific and is exclusively expressed in spermatids.

It is found in the membrane. It localises to the cytoplasm. Its subcellular location is the cytoskeleton. The protein localises to the nucleus envelope. The protein resides in the nucleus inner membrane. It is found in the flagellum axoneme. In terms of biological role, involved in spermatogenesis. Required for sperm head formation but not required to establish and maintain general polarity of the sperm head. Required for anchoring and organization of the manchette. Required for targeting of SUN3 and probably SYNE1 through a probable SUN1:SYNE3 LINC complex to the nuclear envelope and involved in accurate posterior sperm head localization of the complex. May anchor SUN3 the nuclear envelope. Involved in maintenance of the nuclear envelope integrity. May assist the organization and assembly of outer dense fibers (ODFs), a specific structure of the sperm tail. This Mus musculus (Mouse) protein is Sperm-associated antigen 4 protein (Spag4).